Reading from the N-terminus, the 144-residue chain is MQLTSFTDYGLRALIYLATLPEGELTSISKVTEVYGVSRNHMVKIINKLGQLGYVDTVRGKNGGIRLGMPANRIILGDVVRATEPLQIVNCSEDFCHITPACQLKGILASARSAFLAELDKHTLLSLIDNNPPLLVLLDRPVTE.

The 128-residue stretch at 2–129 (QLTSFTDYGL…DKHTLLSLID (128 aa)) folds into the HTH rrf2-type domain. The segment at residues 28-51 (ISKVTEVYGVSRNHMVKIINKLGQ) is a DNA-binding region (H-T-H motif). The [2Fe-2S] cluster site is built by cysteine 91, cysteine 96, and cysteine 102.

The cofactor is [2Fe-2S] cluster.

Nitric oxide-sensitive repressor of genes involved in protecting the cell against nitrosative stress. May require iron for activity. The sequence is that of HTH-type transcriptional repressor NsrR from Photobacterium profundum (strain SS9).